A 171-amino-acid polypeptide reads, in one-letter code: 3-hydroxydecanoyl-[acyl-carrier-protein] dehydratase (171 aa).

The active site involves H71.

The protein belongs to the thioester dehydratase family. FabA subfamily. As to quaternary structure, homodimer.

The protein resides in the cytoplasm. The enzyme catalyses a (3R)-hydroxyacyl-[ACP] = a (2E)-enoyl-[ACP] + H2O. It catalyses the reaction (3R)-hydroxydecanoyl-[ACP] = (2E)-decenoyl-[ACP] + H2O. It carries out the reaction (2E)-decenoyl-[ACP] = (3Z)-decenoyl-[ACP]. It functions in the pathway lipid metabolism; fatty acid biosynthesis. Functionally, necessary for the introduction of cis unsaturation into fatty acids. Catalyzes the dehydration of (3R)-3-hydroxydecanoyl-ACP to E-(2)-decenoyl-ACP and then its isomerization to Z-(3)-decenoyl-ACP. Can catalyze the dehydratase reaction for beta-hydroxyacyl-ACPs with saturated chain lengths up to 16:0, being most active on intermediate chain length. This Sinorhizobium medicae (strain WSM419) (Ensifer medicae) protein is 3-hydroxydecanoyl-[acyl-carrier-protein] dehydratase.